Consider the following 223-residue polypeptide: Cytidylate kinase (223 aa).

Gly10–Thr18 provides a ligand contact to ATP.

It belongs to the cytidylate kinase family. Type 1 subfamily.

The protein localises to the cytoplasm. It catalyses the reaction CMP + ATP = CDP + ADP. The catalysed reaction is dCMP + ATP = dCDP + ADP. This Exiguobacterium sibiricum (strain DSM 17290 / CCUG 55495 / CIP 109462 / JCM 13490 / 255-15) protein is Cytidylate kinase.